A 344-amino-acid chain; its full sequence is 2,3,4,5-tetrahydropyridine-2,6-dicarboxylate N-succinyltransferase (344 aa).

A Mg(2+)-binding site is contributed by glutamate 205. Glutamate 221 functions as the Acyl-anhydride intermediate in the catalytic mechanism. Succinyl-CoA contacts are provided by residues arginine 223, glycine 238, serine 241, alanine 264, 279–280, glycine 287, lysine 304, and 317–320; these read EA and RRNS.

Belongs to the type 2 tetrahydrodipicolinate N-succinyltransferase family. Homotrimer.

Its subcellular location is the cytoplasm. The enzyme catalyses (S)-2,3,4,5-tetrahydrodipicolinate + succinyl-CoA + H2O = (S)-2-succinylamino-6-oxoheptanedioate + CoA. It functions in the pathway amino-acid biosynthesis; L-lysine biosynthesis via DAP pathway; LL-2,6-diaminopimelate from (S)-tetrahydrodipicolinate (succinylase route): step 1/3. Catalyzes the conversion of the cyclic tetrahydrodipicolinate (THDP) into the acyclic N-succinyl-L-2-amino-6-oxopimelate using succinyl-CoA. This is 2,3,4,5-tetrahydropyridine-2,6-dicarboxylate N-succinyltransferase from Pseudomonas putida (strain ATCC 47054 / DSM 6125 / CFBP 8728 / NCIMB 11950 / KT2440).